The sequence spans 471 residues: Glutamate--tRNA ligase (471 aa).

Residues 9-19 (PSPTGYLHVGG) carry the 'HIGH' region motif. Zn(2+)-binding residues include cysteine 98, cysteine 100, cysteine 125, and histidine 127. Residues 237 to 241 (KLSKR) carry the 'KMSKS' region motif. Position 240 (lysine 240) interacts with ATP.

The protein belongs to the class-I aminoacyl-tRNA synthetase family. Glutamate--tRNA ligase type 1 subfamily. In terms of assembly, monomer. The cofactor is Zn(2+).

The protein localises to the cytoplasm. The catalysed reaction is tRNA(Glu) + L-glutamate + ATP = L-glutamyl-tRNA(Glu) + AMP + diphosphate. Its function is as follows. Catalyzes the attachment of glutamate to tRNA(Glu) in a two-step reaction: glutamate is first activated by ATP to form Glu-AMP and then transferred to the acceptor end of tRNA(Glu). This is Glutamate--tRNA ligase from Salmonella gallinarum (strain 287/91 / NCTC 13346).